The primary structure comprises 304 residues: UDP-3-O-acyl-N-acetylglucosamine deacetylase (304 aa).

Zn(2+) is bound by residues histidine 78, histidine 237, and aspartate 241. Histidine 264 (proton donor) is an active-site residue.

The protein belongs to the LpxC family. Zn(2+) serves as cofactor.

The enzyme catalyses a UDP-3-O-[(3R)-3-hydroxyacyl]-N-acetyl-alpha-D-glucosamine + H2O = a UDP-3-O-[(3R)-3-hydroxyacyl]-alpha-D-glucosamine + acetate. The protein operates within glycolipid biosynthesis; lipid IV(A) biosynthesis; lipid IV(A) from (3R)-3-hydroxytetradecanoyl-[acyl-carrier-protein] and UDP-N-acetyl-alpha-D-glucosamine: step 2/6. Catalyzes the hydrolysis of UDP-3-O-myristoyl-N-acetylglucosamine to form UDP-3-O-myristoylglucosamine and acetate, the committed step in lipid A biosynthesis. The chain is UDP-3-O-acyl-N-acetylglucosamine deacetylase from Nitrosococcus oceani (strain ATCC 19707 / BCRC 17464 / JCM 30415 / NCIMB 11848 / C-107).